Here is a 283-residue protein sequence, read N- to C-terminus: Elongation factor Ts (283 aa).

The segment at 80–83 (TDFV) is involved in Mg(2+) ion dislocation from EF-Tu.

Belongs to the EF-Ts family.

It is found in the cytoplasm. In terms of biological role, associates with the EF-Tu.GDP complex and induces the exchange of GDP to GTP. It remains bound to the aminoacyl-tRNA.EF-Tu.GTP complex up to the GTP hydrolysis stage on the ribosome. This chain is Elongation factor Ts, found in Actinobacillus pleuropneumoniae serotype 3 (strain JL03).